Reading from the N-terminus, the 668-residue chain is Protein IQ-DOMAIN 14 (668 aa).

A calmodulin-binding region spans residues 1-11 (MVKKGSWFSAI). Disordered stretches follow at residues 16–54 (TPHSKEKLANEPERKSGKEKKKKGFGKLRHGETNSFLPI) and 66–305 (GEAE…PRAV). Basic and acidic residues predominate over residues 18-31 (HSKEKLANEPERKS). Positions 32-43 (GKEKKKKGFGKL) are enriched in basic residues. The segment covering 78–96 (PPTPDRPNPYSASPPPRPA) has biased composition (pro residues). Low complexity-rich tracts occupy residues 97-120 (SPRVASPRPTSPRVASPRVPSPRA) and 166-175 (PSSASANAPP). Residues 269–279 (PTTPKPPSPRS) show a composition bias toward pro residues. IQ domains follow at residues 321–350 (QHASATKIQGAFRGYMARKSFRALKGLVRL) and 343–372 (ALKGLVRLQGVVRGYSVKRQTINAMKYMQQ). Disordered stretches follow at residues 399–431 (AKWAASEAGNDNWDDSVLTKEERDSRSQRKTDA) and 476–561 (SPAP…SLTS). The span at 415–431 (VLTKEERDSRSQRKTDA) shows a compositional bias: basic and acidic residues. Residues 516–529 (DTSTPRSSRSTFHT) are compositionally biased toward polar residues.

It belongs to the IQD family. Binds to multiple calmodulin (CaM) in the presence of Ca(2+) and CaM-like proteins. Expressed in hypocotyls, cotyledons, leaves and petioles.

Its subcellular location is the cell membrane. The protein resides in the cytoplasm. It is found in the cytoskeleton. Its function is as follows. May be involved in cooperative interactions with calmodulins or calmodulin-like proteins. Recruits calmodulin proteins to microtubules, thus being a potential scaffold in cellular signaling and trafficking. Regulates cell and organ shapes (prevents twisting) in aerial parts probably by regulating transverse microtubules (MT) arrays alignment. Regulates the formation of oval xylem secondary cell-wall deposition pits through microtubule-dependent lateral inhibition of Rho GTPase domains, thus confining the area of active ROP domains within the lattice of the cortical microtubules. May associate with nucleic acids and regulate gene expression at the transcriptional or post-transcriptional level. This is Protein IQ-DOMAIN 14 from Arabidopsis thaliana (Mouse-ear cress).